The sequence spans 532 residues: MDITKENYYEELDNIAKNIKDSCFISFDAEFSAILTKESFKYSLFDTNEERYNKYKTQISTMKMMQVGLTMFQYDRELDAYLATGYTFHLCPQLIGTINQSLIFQASTLKFLCKHNFDFNKFIYEGLPYLSKSDEALLNRYRIENNLFDYVSESLEFDEEKQINQCSSEVSKWLSSSIEDTMYLDIDNAICRYLLHLELRQRYPGILTTDSLGNSKKILIYRDKNVEGAKNAPIAILEDNLIAYLLGFLHVIKLLETHKKPIVGHNMFLDMLFLHNQFIGPLPDSYTMFKKNINSVFPTIFDTKYISHAMSKKLTFSESWKSNALQDLYEFFAERKCKKLEYGINIVRLTTPFDIKQSYHEAGWDAYCSGYCFIRLGHWAACENRGKSHVIGPREKLAALAPYCNKVNVIRGGVSYMNFSENDPPRNRPVLLHVKCLKDTVIDVEKVASLLGSFGSIDIKPCGKRAALVATGAQFMVDKILKTYENNRDYRISKYSVYKHSVAGRFAIWSGSIVTGGLALYLIHKKFKSILL.

Mg(2+) is bound by residues aspartate 28, glutamate 30, aspartate 270, and aspartate 365. Residues 503–523 (AGRFAIWSGSIVTGGLALYLI) traverse the membrane as a helical segment.

It belongs to the CAF1 family. As to quaternary structure, interacts with Papi/Tdrkh; interaction takes place on the mitochondrial surface and recruits PNLDC1/trimmer to PIWI-bound pre-piRNAs. Mg(2+) serves as cofactor.

The protein localises to the mitochondrion outer membrane. In terms of biological role, 3'-5' exonuclease that specifically cleaves precursor piRNAs (pre-piRNAs) at their 3' ends. Trims pre-piRNAs to their mature size, a process required for piRNAs maturation and stabilization, and subsequent pre-piRNAs 2'-O-methylation. The piRNA metabolic process mediates the repression of transposable elements during meiosis by forming complexes composed of piRNAs and Piwi proteins and govern the methylation and subsequent repression of transposons. This chain is Pre-piRNA 3'-exonuclease trimmer, found in Bombyx mori (Silk moth).